The chain runs to 166 residues: NADH-quinone oxidoreductase subunit E (166 aa).

[2Fe-2S] cluster-binding residues include Cys-92, Cys-97, Cys-133, and Cys-137.

It belongs to the complex I 24 kDa subunit family. In terms of assembly, composed of 13 different subunits. Subunits NuoCD, E, F, and G constitute the peripheral sector of the complex. [2Fe-2S] cluster serves as cofactor.

The catalysed reaction is a quinone + NADH + 5 H(+)(in) = a quinol + NAD(+) + 4 H(+)(out). In terms of biological role, NDH-1 shuttles electrons from NADH, via FMN and iron-sulfur (Fe-S) centers, to quinones in the respiratory chain. The immediate electron acceptor for the enzyme in this species is believed to be ubiquinone. Couples the redox reaction to proton translocation (for every two electrons transferred, four hydrogen ions are translocated across the cytoplasmic membrane), and thus conserves the redox energy in a proton gradient. The sequence is that of NADH-quinone oxidoreductase subunit E (nuoE) from Pseudomonas aeruginosa (strain ATCC 15692 / DSM 22644 / CIP 104116 / JCM 14847 / LMG 12228 / 1C / PRS 101 / PAO1).